A 391-amino-acid polypeptide reads, in one-letter code: 8-amino-7-oxononanoate synthase (391 aa).

Arg-24 provides a ligand contact to substrate. 112–113 (GY) provides a ligand contact to pyridoxal 5'-phosphate. His-137 is a binding site for substrate. Pyridoxal 5'-phosphate contacts are provided by Ser-183, His-211, and Thr-240. At Lys-243 the chain carries N6-(pyridoxal phosphate)lysine. Thr-357 lines the substrate pocket.

It belongs to the class-II pyridoxal-phosphate-dependent aminotransferase family. BioF subfamily. As to quaternary structure, homodimer. Pyridoxal 5'-phosphate serves as cofactor.

The catalysed reaction is 6-carboxyhexanoyl-[ACP] + L-alanine + H(+) = (8S)-8-amino-7-oxononanoate + holo-[ACP] + CO2. Its pathway is cofactor biosynthesis; biotin biosynthesis. In terms of biological role, catalyzes the decarboxylative condensation of pimeloyl-[acyl-carrier protein] and L-alanine to produce 8-amino-7-oxononanoate (AON), [acyl-carrier protein], and carbon dioxide. This Alkalilimnicola ehrlichii (strain ATCC BAA-1101 / DSM 17681 / MLHE-1) protein is 8-amino-7-oxononanoate synthase.